Here is a 255-residue protein sequence, read N- to C-terminus: Thiazole synthase (255 aa).

Lysine 95 serves as the catalytic Schiff-base intermediate with DXP. Residues glycine 156, 182-183 (AG), and 204-205 (NT) contribute to the 1-deoxy-D-xylulose 5-phosphate site.

It belongs to the ThiG family. In terms of assembly, homotetramer. Forms heterodimers with either ThiH or ThiS.

Its subcellular location is the cytoplasm. The enzyme catalyses [ThiS sulfur-carrier protein]-C-terminal-Gly-aminoethanethioate + 2-iminoacetate + 1-deoxy-D-xylulose 5-phosphate = [ThiS sulfur-carrier protein]-C-terminal Gly-Gly + 2-[(2R,5Z)-2-carboxy-4-methylthiazol-5(2H)-ylidene]ethyl phosphate + 2 H2O + H(+). The protein operates within cofactor biosynthesis; thiamine diphosphate biosynthesis. Its function is as follows. Catalyzes the rearrangement of 1-deoxy-D-xylulose 5-phosphate (DXP) to produce the thiazole phosphate moiety of thiamine. Sulfur is provided by the thiocarboxylate moiety of the carrier protein ThiS. In vitro, sulfur can be provided by H(2)S. In Photorhabdus laumondii subsp. laumondii (strain DSM 15139 / CIP 105565 / TT01) (Photorhabdus luminescens subsp. laumondii), this protein is Thiazole synthase.